A 59-amino-acid polypeptide reads, in one-letter code: Potassium channel toxin alpha-KTx 16.7 (59 aa).

Positions 1–22 (MKILSILLIALVICSISICTEA) are cleaved as a signal peptide. Disulfide bonds link Cys30–Cys51, Cys36–Cys56, and Cys40–Cys58.

Belongs to the short scorpion toxin superfamily. Potassium channel inhibitor family. Alpha-KTx 16 subfamily. As to expression, expressed by the venom gland.

It is found in the secreted. Its function is as follows. May play a role in blocking voltage-gated potassium channels Kv1.2/KCNA2, and Kv1.3/KCNA3. Blocks the voltage-gated potassium channel Kv1.3/KCNA3, with an IC(50) of 118.3 +-55.8 nM. This chain is Potassium channel toxin alpha-KTx 16.7, found in Mesobuthus gibbosus (Mediterranean checkered scorpion).